The chain runs to 286 residues: ATP synthase gamma chain (286 aa).

This sequence belongs to the ATPase gamma chain family. In terms of assembly, F-type ATPases have 2 components, CF(1) - the catalytic core - and CF(0) - the membrane proton channel. CF(1) has five subunits: alpha(3), beta(3), gamma(1), delta(1), epsilon(1). CF(0) has three main subunits: a, b and c.

Its subcellular location is the cell inner membrane. In terms of biological role, produces ATP from ADP in the presence of a proton gradient across the membrane. The gamma chain is believed to be important in regulating ATPase activity and the flow of protons through the CF(0) complex. The chain is ATP synthase gamma chain from Shewanella sediminis (strain HAW-EB3).